Reading from the N-terminus, the 419-residue chain is N-acylneuraminate cytidylyltransferase (419 aa).

It belongs to the CMP-NeuNAc synthase family. As to quaternary structure, monomer. May form aggregates. It depends on Mg(2+) as a cofactor. Requires Mn(2+) as cofactor.

It localises to the cytoplasm. The enzyme catalyses an N-acylneuraminate + CTP = a CMP-N-acyl-beta-neuraminate + diphosphate. Inhibited by the CTP analogs 5-mercuri-CTP and CTP-2',3'-dialdehyde. Functionally, catalyzes the formation of CMP-N-acetylneuraminic acid (CMP-NeuNAc), which is essential for the formation of the capsule. This is N-acylneuraminate cytidylyltransferase (neuA) from Escherichia coli O18:K1:H7 (strain RS218 / NMEC).